The primary structure comprises 200 residues: NAD(P)H dehydrogenase (quinone) (200 aa).

In terms of domain architecture, Flavodoxin-like spans 4–191 (VLVLYYSSYG…DIARYQGKHV (188 aa)). FMN is bound by residues 10–15 (SSYGHV) and 79–81 (TRF). Y12 lines the NAD(+) pocket. W99 is a binding site for substrate. Residues 114 to 120 (STGTQHG) and H135 each bind FMN.

Belongs to the WrbA family. The cofactor is FMN.

It catalyses the reaction a quinone + NADH + H(+) = a quinol + NAD(+). It carries out the reaction a quinone + NADPH + H(+) = a quinol + NADP(+). This Burkholderia cenocepacia (strain HI2424) protein is NAD(P)H dehydrogenase (quinone).